The primary structure comprises 543 residues: Probable malate:quinone oxidoreductase (543 aa).

Belongs to the MQO family. The cofactor is FAD.

It carries out the reaction (S)-malate + a quinone = a quinol + oxaloacetate. It functions in the pathway carbohydrate metabolism; tricarboxylic acid cycle; oxaloacetate from (S)-malate (quinone route): step 1/1. The protein is Probable malate:quinone oxidoreductase of Acinetobacter baylyi (strain ATCC 33305 / BD413 / ADP1).